Here is a 121-residue protein sequence, read N- to C-terminus: Group 1 truncated hemoglobin (121 aa).

Methionine 1 bears the N-acetylmethionine mark. Histidine 73 lines the heme pocket.

Belongs to the truncated hemoglobin family. Group I subfamily. As to quaternary structure, monomer. It depends on heme as a cofactor.

This is Group 1 truncated hemoglobin from Tetrahymena thermophila.